The sequence spans 499 residues: Calcium/calmodulin-dependent protein kinase type II subunit delta (499 aa).

Residue Ala2 is modified to N-acetylalanine. Residues 14-272 (YQLFEELGKG…ASEALKHPWI (259 aa)) form the Protein kinase domain. ATP-binding positions include 20 to 28 (LGKGAFSVV) and Lys43. The active-site Proton acceptor is the Asp136. The interval 283 to 292 (HRQETVDCLK) is autoinhibitory domain. Thr287 is subject to Phosphothreonine; by autocatalysis. A calmodulin-binding region spans residues 291–301 (LKKFNARRKLK). 2 positions are modified to phosphothreonine; by autocatalysis: Thr306 and Thr307. A Phosphoserine modification is found at Ser315. Lys318 is subject to N6-acetyllysine. Phosphoserine occurs at positions 319 and 330. A Phosphothreonine modification is found at Thr331. Ser333 carries the post-translational modification Phosphoserine. Phosphothreonine is present on residues Thr336 and Thr337. Phosphoserine is present on residues Ser404, Ser490, and Ser494.

It belongs to the protein kinase superfamily. CAMK Ser/Thr protein kinase family. CaMK subfamily. In terms of assembly, CAMK2 is composed of 4 different chains: alpha (CAMK2A), beta (CAMK2B), gamma (CAMK2G), and delta (CAMK2D). The different isoforms assemble into homo- or heteromultimeric holoenzymes composed of 12 subunits with two hexameric rings stacked one on top of the other. Interacts with RRAD CACNB2. Post-translationally, autophosphorylation of Thr-287 following activation by Ca(2+)/calmodulin. Phosphorylation of Thr-287 locks the kinase into an activated state.

It is found in the cell membrane. It localises to the sarcolemma. The protein localises to the sarcoplasmic reticulum membrane. It carries out the reaction L-seryl-[protein] + ATP = O-phospho-L-seryl-[protein] + ADP + H(+). The catalysed reaction is L-threonyl-[protein] + ATP = O-phospho-L-threonyl-[protein] + ADP + H(+). With respect to regulation, activated by Ca(2+)/calmodulin. Binding of calmodulin results in conformational change that relieves intrasteric autoinhibition and allows autophosphorylation of Thr-287 which turns the kinase in a constitutively active form and confers to the kinase a Ca(2+)-independent activity. Calcium/calmodulin-dependent protein kinase involved in the regulation of Ca(2+) homeostatis and excitation-contraction coupling (ECC) in heart by targeting ion channels, transporters and accessory proteins involved in Ca(2+) influx into the myocyte, Ca(2+) release from the sarcoplasmic reticulum (SR), SR Ca(2+) uptake and Na(+) and K(+) channel transport. Targets also transcription factors and signaling molecules to regulate heart function. In its activated form, is involved in the pathogenesis of dilated cardiomyopathy and heart failure. Contributes to cardiac decompensation and heart failure by regulating SR Ca(2+) release via direct phosphorylation of RYR2 Ca(2+) channel on 'Ser-2808'. In the nucleus, phosphorylates the MEF2 repressor HDAC4, promoting its nuclear export and binding to 14-3-3 protein, and expression of MEF2 and genes involved in the hypertrophic program. Is essential for left ventricular remodeling responses to myocardial infarction. In pathological myocardial remodeling acts downstream of the beta adrenergic receptor signaling cascade to regulate key proteins involved in ECC. Regulates Ca(2+) influx to myocytes by binding and phosphorylating the L-type Ca(2+) channel subunit beta-2 CACNB2. In addition to Ca(2+) channels, can target and regulate the cardiac sarcolemmal Na(+) channel Nav1.5/SCN5A and the K+ channel Kv4.3/KCND3, which contribute to arrhythmogenesis in heart failure. Phosphorylates phospholamban (PLN/PLB), an endogenous inhibitor of SERCA2A/ATP2A2, contributing to the enhancement of SR Ca(2+) uptake that may be important in frequency-dependent acceleration of relaxation (FDAR) and maintenance of contractile function during acidosis. May participate in the modulation of skeletal muscle function in response to exercise, by regulating SR Ca(2+) transport through phosphorylation of PLN/PLB and triadin, a ryanodine receptor-coupling factor. In response to interferon-gamma (IFN-gamma) stimulation, catalyzes phosphorylation of STAT1, stimulating the JAK-STAT signaling pathway. This chain is Calcium/calmodulin-dependent protein kinase type II subunit delta (CAMK2D), found in Sus scrofa (Pig).